A 77-amino-acid chain; its full sequence is MKLMIFTGLVLFAIVSLIEAQAENEKPCLPEYKVCTHAPGNCCSDLVCDCYGRYKSGAQIGRNCFCLQKGVIYKREN.

An N-terminal signal peptide occupies residues 1–20 (MKLMIFTGLVLFAIVSLIEA). Positions 21 to 26 (QAENEK) are excised as a propeptide.

This sequence belongs to the neurotoxin 19 (CSTX) family. 08 (U8-Lctx) subfamily. In terms of processing, contains 4 disulfide bonds. In terms of tissue distribution, expressed by the venom gland.

It localises to the secreted. The chain is U8-lycotoxin-Ls1m from Lycosa singoriensis (Wolf spider).